The primary structure comprises 181 residues: MSFQEVWEKEPMKKPRIQKVTVNFGVGEAGDRLTIGAKVIETLTGQAPVRTLAKQTNPAFGIRKKLPIGLKVTLRGKNAEEFLENAFVAFKVSGKVLYASSFDKVGNFSFGVPEHIDFPGQKYDPTVGIYGMDICVTFEKPGYRVKSRKLKRSHIPAKHLVKKEEAIEYIEKKFGAEVVME.

Belongs to the universal ribosomal protein uL5 family. As to quaternary structure, part of the 50S ribosomal subunit; contacts the 5S rRNA and probably tRNA. Forms a bridge to the 30S subunit in the 70S ribosome.

In terms of biological role, this is one of the proteins that bind and probably mediate the attachment of the 5S RNA into the large ribosomal subunit, where it forms part of the central protuberance. In the 70S ribosome it contacts protein S13 of the 30S subunit (bridge B1b), connecting the 2 subunits; this bridge is implicated in subunit movement. May contact the P site tRNA; the 5S rRNA and some of its associated proteins might help stabilize positioning of ribosome-bound tRNAs. In Methanococcus vannielii, this protein is Large ribosomal subunit protein uL5.